A 183-amino-acid polypeptide reads, in one-letter code: Disulfide bond formation protein B 2 (183 aa).

The Cytoplasmic segment spans residues 1-9; the sequence is MSLACSRSL. Residues 10–26 form a helical membrane-spanning segment; that stretch reads FFMAFTAGILALGASYY. The Periplasmic portion of the chain corresponds to 27–44; sequence LEYAVGLVPCSLCLVQRL. A disulfide bridge connects residues Cys36 and Cys39. Residues 45–61 form a helical membrane-spanning segment; sequence FMSVLTLCCGLAAVHGP. Residues 62-68 lie on the Cytoplasmic side of the membrane; sequence QRVGLSL. The chain crosses the membrane as a helical span at residues 69 to 85; the sequence is YWMVTLLSSLGGTTAAW. Residues 86–142 lie on the Periplasmic side of the membrane; sequence RQVLFQSDSLQELAHCAPNPEEMFSSLPWLCALMRMFNDTADCAELSWTLFDLSIPE. Cysteines 101 and 128 form a disulfide. Residues 143–161 form a helical membrane-spanning segment; the sequence is WSLLFFVGMSILAVYQLLR. At 162 to 183 the chain is on the cytoplasmic side; sequence QVWMALQRPLSGQPSHPALVRD.

It belongs to the DsbB family.

It is found in the cell inner membrane. Its function is as follows. Required for disulfide bond formation in some periplasmic proteins. Acts by oxidizing the DsbA protein. The protein is Disulfide bond formation protein B 2 of Pseudomonas fluorescens (strain Pf0-1).